The chain runs to 2434 residues: Protein Ycf2 (2434 aa).

1693 to 1700 (GPTETGRS) serves as a coordination point for ATP.

This sequence belongs to the Ycf2 family.

It is found in the plastid. The protein resides in the chloroplast stroma. Its function is as follows. Probable ATPase of unknown function. Its presence in a non-photosynthetic plant (Epifagus virginiana) and experiments in tobacco indicate that it has an essential function which is probably not related to photosynthesis. This is Protein Ycf2 from Cycas taitungensis (Prince sago).